We begin with the raw amino-acid sequence, 308 residues long: Palmitoyltransferase ZDHHC7 (308 aa).

Residues 1–50 (MQPSGHRLRDIEHHPLLTDNDNYDSASSSSSETDMADRVWFIRDGCGMVC) are Cytoplasmic-facing. Residues 51 to 71 (AVMTWLLVVYADFVVTFVMLL) traverse the membrane as a helical segment. The Lumenal segment spans residues 72–75 (PSKD). A helical transmembrane segment spans residues 76 to 96 (FWYSVVNGVLFNCLAVLALSS). The Cytoplasmic segment spans residues 97-173 (HLRTMLTDPG…NNCVGEKNQR (77 aa)). A DHHC domain is found at 130-180 (YKCPKCCCIKPERAHHCSICKRCIRKMDHHCPWVNNCVGEKNQRFFVLFTM). Cysteine 160 serves as the catalytic S-palmitoyl cysteine intermediate. Residues 174 to 194 (FFVLFTMYIALSSVHALILCG) traverse the membrane as a helical segment. Residues 195 to 217 (LQFISCVRGQWTECSDFSPPITV) lie on the Lumenal side of the membrane. Residues 218 to 238 (ILLVFLCLEGLLFFTFTAVMF) traverse the membrane as a helical segment. The Cytoplasmic portion of the chain corresponds to 239-308 (GTQIHSICND…TRKGGPEFSV (70 aa)).

Belongs to the DHHC palmitoyltransferase family. As to quaternary structure, homooligomers. Heterooligomers with ZDHHC3. Post-translationally, autopalmitoylated. Ubiquitously expressed, with highest levels in liver, kidney and brain. Expressed in all brain regions.

It is found in the golgi apparatus membrane. It catalyses the reaction L-cysteinyl-[protein] + hexadecanoyl-CoA = S-hexadecanoyl-L-cysteinyl-[protein] + CoA. The catalysed reaction is L-cysteinyl-[protein] + tetradecanoyl-CoA = S-tetradecanoyl-L-cysteinyl-[protein] + CoA. The enzyme catalyses L-cysteinyl-[protein] + octadecanoyl-CoA = S-octadecanoyl-L-cysteinyl-[protein] + CoA. Its function is as follows. Golgi-localized palmitoyltransferase that catalyzes the addition of palmitate onto various protein substrates and therefore functions in several unrelated biological processes. Has no stringent fatty acid selectivity and in addition to palmitate can also transfer onto target proteins myristate from tetradecanoyl-CoA and stearate from octadecanoyl-CoA. Palmitoylates sex steroid hormone receptors, including ESR1, PGR and AR, thereby regulating their targeting to the plasma membrane and their function in rapid intracellular signaling upon binding of sex hormones. Palmitoylates GNAQ, a heterotrimeric G protein, regulating its dynamic localization at the plasma membrane and is thereby involved in GNAQ-dependent G protein-coupled receptor signaling pathways. Also functions in ligand-induced cell death by regulating the FAS signaling pathway through the palmitoylation and stabilization of the receptor at the plasma membrane. In epithelial cells, palmitoylates SCRIB and regulates its localization to the plasma membrane, regulating indirectly cell polarity and differentiation. Also palmitoylates JAM3 and promotes its expression at tight junctions and regulates its function in cell migration. Palmitoylates the glucose transporter GLUT4/SLC2A4 and controls the insulin-dependent translocation of GLUT4 to the plasma membrane. In brain, could also palmitoylate SNAP25 and DLG4/PSD95. Could also palmitoylate DNAJC5 and regulate its localization to the Golgi membrane. Could also palmitoylate NCDN. May play a role in follicle stimulation hormone (FSH) activation of testicular Sertoli cells. Activates pyroptosis by catalyzing palmitoylation of gasdermin-D (GSDMD). The polypeptide is Palmitoyltransferase ZDHHC7 (Mus musculus (Mouse)).